A 436-amino-acid chain; its full sequence is uncharacterized protein (436 aa).

This is an uncharacterized protein from Haemophilus influenzae (strain ATCC 51907 / DSM 11121 / KW20 / Rd).